Consider the following 237-residue polypeptide: Uridylate kinase (237 aa).

Residue 11-14 (KLSG) coordinates ATP. A UMP-binding site is contributed by G53. ATP contacts are provided by G54 and R58. UMP-binding positions include D73 and 134–141 (TGNPFFTT). ATP contacts are provided by T161, Y167, and D170.

It belongs to the UMP kinase family. As to quaternary structure, homohexamer.

Its subcellular location is the cytoplasm. The enzyme catalyses UMP + ATP = UDP + ADP. The protein operates within pyrimidine metabolism; CTP biosynthesis via de novo pathway; UDP from UMP (UMPK route): step 1/1. With respect to regulation, inhibited by UTP. Its function is as follows. Catalyzes the reversible phosphorylation of UMP to UDP. This is Uridylate kinase from Burkholderia vietnamiensis (strain G4 / LMG 22486) (Burkholderia cepacia (strain R1808)).